The primary structure comprises 259 residues: LOB domain-containing protein CRL1 (259 aa).

One can recognise an LOB domain in the interval Ser6 to Ala108.

The protein belongs to the LOB domain-containing protein family. As to quaternary structure, can form homodimers. As to expression, expressed in unelongating basal internodes, at the base of shoot in parenchyma cells adjacent to the peripheral vascular cylinder of the stem, and root pericycle cells. Expressed in lateral and adventitious root primordia, tiller primordia, vascular tissues, scutellum, and young pedicels.

Its subcellular location is the nucleus. Acts as a positive regulator of adventitious (crown) root formation by promoting its initiation. Acts as a positive regulator of lateral root formation. Regulated by the auxin response factor and transcriptional activator ARF23/ARF1. Involved in auxin-mediated cell dedifferentiation, and may promote the initial cell division in the pericycle cells adjacent to the peripheral vascular cylinder at the base of the stem. May act upstream of the gene regulatory network controlling adventitious root (crown) development. In Oryza sativa subsp. japonica (Rice), this protein is LOB domain-containing protein CRL1.